The primary structure comprises 959 residues: Glutamate receptor 3.4 (959 aa).

Residues 1-35 (MGFLVMIREVSMAKAIRVVLLCVSVLWVVPKECAC) form the signal peptide. Over 36–613 (RSNFSRNSSS…SPWSFLKPFT (578 aa)) the chain is Extracellular. Asn-38, Asn-42, Asn-108, Asn-365, Asn-378, Asn-404, Asn-443, Asn-461, and Asn-576 each carry an N-linked (GlcNAc...) asparagine glycan. The chain crosses the membrane as a helical span at residues 614–634 (IEMWAVTGGFFLFVGAMVWIL). Residues 635 to 643 (EHRFNQEFR) are Cytoplasmic-facing. The chain crosses the membrane as a helical span at residues 644–664 (GPPRRQLITIFWFSFSTMFFS). The Cytoplasmic portion of the chain corresponds to 665 to 675 (HRENTVSSLGR). Residues 676-696 (FVLIIWLFVVLIINSSYTASL) traverse the membrane as a helical segment. The Extracellular segment spans residues 697–857 (TSILTIRQLT…SEDSQLSLKS (161 aa)). Residues 858-878 (FWGLFLICGITCFMALTVFFW) form a helical membrane-spanning segment. At 879–959 (RVFWQYQRLL…TSQSQHGEIT (81 aa)) the chain is on the cytoplasmic side. 2 disordered regions span residues 893–913 (DEERAGEVSEPSRSGRGSRAP) and 936–959 (KSSKKLKSTQSAAGTSQSQHGEIT). A compositionally biased stretch (low complexity) spans 943–959 (STQSAAGTSQSQHGEIT).

The protein belongs to the glutamate-gated ion channel (TC 1.A.10.1) family. In terms of assembly, forms a heteromeric channel with GLR3.2. In terms of tissue distribution, highly expressed in roots and at lower levels in leaves and siliques. Expressed in seedlings, cotyledons, roots (e.g. root hairs, epidermis and cortex cells), stems, leaves (e.g. vascular bundles and hydathodes), and siliques. Expressed in root phloem.

The protein localises to the cell membrane. The protein resides in the plastid. It localises to the chloroplast membrane. In terms of biological role, glutamate-gated receptor that probably acts as a non-selective cation channel, at least in hypocotyls. Can be triggered by Asn, Ser, Gly and, to a lower extent, Ala, Cys and Glu. May be involved in light-signal transduction and calcium homeostasis via the regulation of calcium influx into cells. Plays an important role in the calcium-based fast transmission of environmental stress. Acts as a negative regulator of lateral root initiation and development. May restrict primordia numbers and position along the root axis by a signaling process originating in the phloem. AtGLR3.4-mediated cytosolic calcium influx may be involved in the regulation of seed germination under salt stress by modulating sodium accumulation through the SOS pathway. The chain is Glutamate receptor 3.4 from Arabidopsis thaliana (Mouse-ear cress).